Reading from the N-terminus, the 1407-residue chain is DNA-directed RNA polymerase subunit beta' (1407 aa).

Zn(2+)-binding residues include C70, C72, C85, and C88. Mg(2+)-binding residues include D460, D462, and D464. Zn(2+) is bound by residues C814, C888, C895, and C898.

It belongs to the RNA polymerase beta' chain family. In terms of assembly, the RNAP catalytic core consists of 2 alpha, 1 beta, 1 beta' and 1 omega subunit. When a sigma factor is associated with the core the holoenzyme is formed, which can initiate transcription. Mg(2+) serves as cofactor. It depends on Zn(2+) as a cofactor.

It carries out the reaction RNA(n) + a ribonucleoside 5'-triphosphate = RNA(n+1) + diphosphate. DNA-dependent RNA polymerase catalyzes the transcription of DNA into RNA using the four ribonucleoside triphosphates as substrates. The polypeptide is DNA-directed RNA polymerase subunit beta' (Salmonella paratyphi A (strain ATCC 9150 / SARB42)).